Reading from the N-terminus, the 306-residue chain is Glutaminase (306 aa).

Residues serine 64, asparagine 115, glutamate 159, asparagine 166, tyrosine 190, tyrosine 242, and valine 260 each coordinate substrate.

It belongs to the glutaminase family. In terms of assembly, homotetramer.

The enzyme catalyses L-glutamine + H2O = L-glutamate + NH4(+). This chain is Glutaminase, found in Vibrio cholerae serotype O1 (strain ATCC 39315 / El Tor Inaba N16961).